The sequence spans 132 residues: Telomere bouquet protein 1 (132 aa).

In terms of assembly, interacts with bqt2 and sad1. The bqt1-bqt2-sad1 complex binds rap1.

Its subcellular location is the cytoplasm. It is found in the cytoskeleton. The protein resides in the microtubule organizing center. It localises to the spindle pole body. The protein localises to the chromosome. Its subcellular location is the telomere. Involved in chromosome segregation. During meiotic prophase, connects telomeres to the spindle pole body by forming a bridge between the telomere protein rap1 and the spindle pole body protein sad1. The chain is Telomere bouquet protein 1 (bqt1) from Schizosaccharomyces pombe (strain 972 / ATCC 24843) (Fission yeast).